The primary structure comprises 55 residues: Large ribosomal subunit protein bL32c (55 aa).

It belongs to the bacterial ribosomal protein bL32 family.

Its subcellular location is the plastid. It is found in the chloroplast. The polypeptide is Large ribosomal subunit protein bL32c (Daucus carota (Wild carrot)).